Consider the following 171-residue polypeptide: Translation initiation factor IF-3 (171 aa).

It belongs to the IF-3 family. As to quaternary structure, monomer.

The protein localises to the cytoplasm. In terms of biological role, IF-3 binds to the 30S ribosomal subunit and shifts the equilibrium between 70S ribosomes and their 50S and 30S subunits in favor of the free subunits, thus enhancing the availability of 30S subunits on which protein synthesis initiation begins. The sequence is that of Translation initiation factor IF-3 from Listeria innocua serovar 6a (strain ATCC BAA-680 / CLIP 11262).